Consider the following 312-residue polypeptide: Aspartate carbamoyltransferase catalytic subunit (312 aa).

2 residues coordinate carbamoyl phosphate: arginine 55 and threonine 56. Position 83 (lysine 83) interacts with L-aspartate. The carbamoyl phosphate site is built by arginine 105, histidine 138, and glutamine 141. 2 residues coordinate L-aspartate: arginine 171 and arginine 225. Carbamoyl phosphate-binding residues include glycine 266 and proline 267.

This sequence belongs to the aspartate/ornithine carbamoyltransferase superfamily. ATCase family. In terms of assembly, heterododecamer (2C3:3R2) of six catalytic PyrB chains organized as two trimers (C3), and six regulatory PyrI chains organized as three dimers (R2).

It catalyses the reaction carbamoyl phosphate + L-aspartate = N-carbamoyl-L-aspartate + phosphate + H(+). Its pathway is pyrimidine metabolism; UMP biosynthesis via de novo pathway; (S)-dihydroorotate from bicarbonate: step 2/3. Functionally, catalyzes the condensation of carbamoyl phosphate and aspartate to form carbamoyl aspartate and inorganic phosphate, the committed step in the de novo pyrimidine nucleotide biosynthesis pathway. The polypeptide is Aspartate carbamoyltransferase catalytic subunit (Corynebacterium glutamicum (strain ATCC 13032 / DSM 20300 / JCM 1318 / BCRC 11384 / CCUG 27702 / LMG 3730 / NBRC 12168 / NCIMB 10025 / NRRL B-2784 / 534)).